The sequence spans 297 residues: B-lymphocyte antigen CD20 (297 aa).

Residues 1–51 (MTTPRNSMSGTLPVDPMKSPTAMYPVQKIIPKRMPSVVGPTQNFFMRESKT) lie on the Cytoplasmic side of the membrane. Ser-36 is subject to Phosphoserine. Residues 52 to 72 (LGAVQIMNGLFHIALGSLLMI) form a helical membrane-spanning segment. Residues 73-75 (HTD) lie on the Extracellular side of the membrane. A helical membrane pass occupies residues 76-96 (VCAPICITMWYPLWGGIMFII). At 97–122 (SGSLLAAADKNPRKSLVKGKMIMNSL) the chain is on the cytoplasmic side. Residues 123 to 143 (SLFAAISGIIFLIMDIFNITI) traverse the membrane as a helical segment. At 144-188 (SHFFKMENLNLIKAPMPYVDIHNCDPANPSEKNSLSIQYCGSIRS) the chain is on the extracellular side. A helical membrane pass occupies residues 189-209 (VFLGVFAVMLIFAFFQKLVTA). The Cytoplasmic portion of the chain corresponds to 210–297 (GIVENEWKKL…SSPIENDSIP (88 aa)). Cys-220 is lipidated: S-palmitoyl cysteine. Phosphoserine is present on Ser-225. Residues 274-297 (ELEINFAEPPQEQESSPIENDSIP) form a disordered region. The segment covering 281-290 (EPPQEQESSP) has biased composition (low complexity).

This sequence belongs to the MS4A family. As to quaternary structure, forms homotetramers. Interacts with the heavy and light chains of cell surface IgM, the antigen-binding components of the BCR. Phosphorylated. Might be functionally regulated by protein kinase(s). In terms of tissue distribution, expressed in PBMCs and lymph node from healthy dogs, in B-cells of canine lymphoma, but not in T-cell lymphoma cells and non-T and non-B-cell lymphoma cells.

The protein localises to the cell membrane. Functionally, B-lymphocyte-specific membrane protein that plays a role in the regulation of cellular calcium influx necessary for the development, differentiation, and activation of B-lymphocytes. Functions as a store-operated calcium (SOC) channel component promoting calcium influx after activation by the B-cell receptor/BCR. This is B-lymphocyte antigen CD20 (MS4A1) from Canis lupus familiaris (Dog).